Reading from the N-terminus, the 424-residue chain is Interferon regulatory factor 8 (424 aa).

Positions 7–114 (GRRLRQWLIE…EPYKVYRIVP (108 aa)) form a DNA-binding region, IRF tryptophan pentad repeat.

This sequence belongs to the IRF family. As to quaternary structure, interacts with COPS2. Interacts (via C-terminus) with TRIM21 (via C-terminus). Interacts with the BATF-JUNB heterodimer. Interacts with BATF (via bZIP domain); the interaction is direct. Interacts with SPI1. Post-translationally, ubiquitinated. Ubiquitination by TRIM21 in macrophages, a process that is strongly increased upon interferon gamma stimulation, leds to the enhanced transcriptional activity of target cytokine genes. Ubiquitination leads to its degradation by the proteasome. Sumoylated with SUMO3. Desumoylated by SENP1. Expressed in bone marrow macrophages (at protein level). Mainly expressed in lymphoid tissues. Predominantly expressed in CD8(+)-expressing dendritic cells.

It is found in the nucleus. Its subcellular location is the cytoplasm. In terms of biological role, transcription factor that specifically binds to the upstream regulatory region of type I interferon (IFN) and IFN-inducible MHC class I genes (the interferon consensus sequence (ICS)). Can both act as a transcriptional activator or repressor. Plays a negative regulatory role in cells of the immune system. Involved in CD8(+) dendritic cell differentiation by forming a complex with the BATF-JUNB heterodimer in immune cells, leading to recognition of AICE sequence (5'-TGAnTCA/GAAA-3'), an immune-specific regulatory element, followed by cooperative binding of BATF and IRF8 and activation of genes. Required for the development of plasmacytoid dendritic cells (pDCs), which produce most of the type I IFN in response to viral infection. Positively regulates macroautophagy in dendritic cells. Acts as a transcriptional repressor of osteoclast differentiation factors such as NFATC1 and EEIG1. In Mus musculus (Mouse), this protein is Interferon regulatory factor 8.